Consider the following 257-residue polypeptide: Type III pantothenate kinase (257 aa).

5–12 (DIGNTNIK) contacts ATP. Residue 107 to 110 (GSDR) participates in substrate binding. Asp109 serves as the catalytic Proton acceptor. An ATP-binding site is contributed by Thr133.

It belongs to the type III pantothenate kinase family. In terms of assembly, homodimer. Requires NH4(+) as cofactor. K(+) is required as a cofactor.

It localises to the cytoplasm. The enzyme catalyses (R)-pantothenate + ATP = (R)-4'-phosphopantothenate + ADP + H(+). The protein operates within cofactor biosynthesis; coenzyme A biosynthesis; CoA from (R)-pantothenate: step 1/5. Catalyzes the phosphorylation of pantothenate (Pan), the first step in CoA biosynthesis. The sequence is that of Type III pantothenate kinase from Ehrlichia ruminantium (strain Gardel).